We begin with the raw amino-acid sequence, 424 residues long: L-glutamine:2-deoxy-scyllo-inosose aminotransferase (424 aa).

N6-(pyridoxal phosphate)lysine is present on Lys-202.

Belongs to the DegT/DnrJ/EryC1 family. L-glutamine:2-deoxy-scyllo-inosose/scyllo-inosose aminotransferase subfamily. Requires pyridoxal 5'-phosphate as cofactor.

The catalysed reaction is 2-deoxy-L-scyllo-inosose + L-glutamine = 2-deoxy-scyllo-inosamine + 2-oxoglutaramate. The enzyme catalyses 3-amino-2,3-dideoxy-scyllo-inosose + L-glutamine = 2-deoxystreptamine + 2-oxoglutaramate. The protein operates within metabolic intermediate biosynthesis; 2-deoxystreptamine biosynthesis; 2-deoxystreptamine from D-glucose 6-phosphate: step 2/4. It participates in metabolic intermediate biosynthesis; 2-deoxystreptamine biosynthesis; 2-deoxystreptamine from D-glucose 6-phosphate: step 4/4. It functions in the pathway antibiotic biosynthesis; neomycin biosynthesis. Catalyzes the PLP-dependent transamination of 2-deoxy-scyllo-inosose (2-DOI) to form 2-deoxy-scyllo-inosamine (2-DOIA) using L-glutamine as the amino donor. Also catalyzes the transamination of 3-amino-2,3-dideoxy-scyllo-inosose (keto-2-DOIA) into 2-deoxystreptamine (2-DOS). This is L-glutamine:2-deoxy-scyllo-inosose aminotransferase (neoB) from Streptomyces fradiae (Streptomyces roseoflavus).